A 379-amino-acid chain; its full sequence is tRNA-specific 2-thiouridylase MnmA (379 aa).

Residues 23 to 30 (AMSGGVDS) and Leu-49 each bind ATP. Catalysis depends on Cys-117, which acts as the Nucleophile. A disulfide bridge connects residues Cys-117 and Cys-214. Gly-141 is a binding site for ATP. The interaction with tRNA stretch occupies residues 163–165 (RDQ). The active-site Cysteine persulfide intermediate is the Cys-214.

Belongs to the MnmA/TRMU family.

The protein localises to the cytoplasm. The catalysed reaction is S-sulfanyl-L-cysteinyl-[protein] + uridine(34) in tRNA + AH2 + ATP = 2-thiouridine(34) in tRNA + L-cysteinyl-[protein] + A + AMP + diphosphate + H(+). In terms of biological role, catalyzes the 2-thiolation of uridine at the wobble position (U34) of tRNA, leading to the formation of s(2)U34. The protein is tRNA-specific 2-thiouridylase MnmA of Cereibacter sphaeroides (strain KD131 / KCTC 12085) (Rhodobacter sphaeroides).